The following is a 344-amino-acid chain: Mitochondrial substrate carrier family protein D (344 aa).

Residues 1-22 (MDSTKTNNKWAAAGILNSVGKD) are Mitochondrial intermembrane-facing. Solcar repeat units lie at residues 17–104 (NSVG…CQSY), 119–212 (IPYH…MKRK), and 239–327 (VPAW…TRNL). Residues 23-43 (FVAGSVGGMSSIMAGHPFDTI) traverse the membrane as a helical segment. The Mitochondrial matrix segment spans residues 44–75 (KVMLQDASGNLPKFKNGFQALKYIMKVDGIKG). A helical transmembrane segment spans residues 76-96 (IYRGLSVPLFSVSFTNSVFFA). Residues 97–116 (TNNFCQSYFHPPCKDENGED) lie on the Mitochondrial intermembrane side of the membrane. Residues 117–137 (ILIPYHKAAAAGAIAGGVISL) traverse the membrane as a helical segment. At 138–186 (LITPRDLVKSKLQVQCRPFGSTNVSLQYKGPIDVIRQTIKRDGIKGMFK) the chain is on the mitochondrial matrix side. A helical membrane pass occupies residues 187–207 (GIRSTFCRDIPGDAVYFVVYE). The Mitochondrial intermembrane portion of the chain corresponds to 208–238 (FMKRKLLALSKNNNNNNNNNDNNDNSSPKAG). A helical transmembrane segment spans residues 239 to 259 (VPAWVAIGAGGCAGMSFWMSI). The Mitochondrial matrix portion of the chain corresponds to 260–301 (YPMDVVKTRIQTQPDHLPPQYTSVLQTITKIYREEGISVFFR). A helical membrane pass occupies residues 302–321 (GFSATILRAFPTSAVNFLMY). Residues 322–344 (ETTRNLLNSKDPFYNNNDHYNAE) are Mitochondrial intermembrane-facing.

Belongs to the mitochondrial carrier (TC 2.A.29) family.

It is found in the mitochondrion inner membrane. Functionally, calcium-dependent mitochondrial solute carrier. Mitochondrial solute carriers shuttle metabolites, nucleotides, and cofactors through the mitochondrial inner membrane. The polypeptide is Mitochondrial substrate carrier family protein D (mcfD) (Dictyostelium discoideum (Social amoeba)).